We begin with the raw amino-acid sequence, 344 residues long: GTPase Obg (344 aa).

Positions 1–159 (MKFLDLAKVY…RTIWLRLKLI (159 aa)) constitute an Obg domain. Residues 160 to 327 (ADVGLLGLPN…VLRALRARID (168 aa)) enclose the OBG-type G domain. Residues 166 to 173 (GLPNAGKS), 191 to 195 (FTTLH), 212 to 215 (DIPG), 279 to 282 (NKID), and 308 to 310 (SGA) contribute to the GTP site. Residues Ser-173 and Thr-193 each contribute to the Mg(2+) site.

The protein belongs to the TRAFAC class OBG-HflX-like GTPase superfamily. OBG GTPase family. In terms of assembly, monomer. It depends on Mg(2+) as a cofactor.

The protein resides in the cytoplasm. Functionally, an essential GTPase which binds GTP, GDP and possibly (p)ppGpp with moderate affinity, with high nucleotide exchange rates and a fairly low GTP hydrolysis rate. Plays a role in control of the cell cycle, stress response, ribosome biogenesis and in those bacteria that undergo differentiation, in morphogenesis control. The chain is GTPase Obg from Ruegeria pomeroyi (strain ATCC 700808 / DSM 15171 / DSS-3) (Silicibacter pomeroyi).